Consider the following 307-residue polypeptide: UDP-3-O-acyl-N-acetylglucosamine deacetylase (307 aa).

Zn(2+)-binding residues include histidine 78, histidine 241, and aspartate 245. Residue histidine 268 is the Proton donor of the active site.

The protein belongs to the LpxC family. Zn(2+) serves as cofactor.

The enzyme catalyses a UDP-3-O-[(3R)-3-hydroxyacyl]-N-acetyl-alpha-D-glucosamine + H2O = a UDP-3-O-[(3R)-3-hydroxyacyl]-alpha-D-glucosamine + acetate. It participates in glycolipid biosynthesis; lipid IV(A) biosynthesis; lipid IV(A) from (3R)-3-hydroxytetradecanoyl-[acyl-carrier-protein] and UDP-N-acetyl-alpha-D-glucosamine: step 2/6. Functionally, catalyzes the hydrolysis of UDP-3-O-myristoyl-N-acetylglucosamine to form UDP-3-O-myristoylglucosamine and acetate, the committed step in lipid A biosynthesis. The protein is UDP-3-O-acyl-N-acetylglucosamine deacetylase of Acidovorax sp. (strain JS42).